Consider the following 164-residue polypeptide: Transcriptional repressor NrdR (164 aa).

The segment at 3-34 (CPKCNYNKSSVVDSRQAEDGNTIRRRRECEKC) is a zinc-finger region. Residues 49-139 (LLVVKKDGTR…VYKSFKDVDE (91 aa)) enclose the ATP-cone domain.

Belongs to the NrdR family. It depends on Zn(2+) as a cofactor.

Negatively regulates transcription of bacterial ribonucleotide reductase nrd genes and operons by binding to NrdR-boxes. This chain is Transcriptional repressor NrdR, found in Streptococcus uberis (strain ATCC BAA-854 / 0140J).